Reading from the N-terminus, the 1342-residue chain is DNA-directed RNA polymerase subunit beta (1342 aa).

This sequence belongs to the RNA polymerase beta chain family. In terms of assembly, the RNAP catalytic core consists of 2 alpha, 1 beta, 1 beta' and 1 omega subunit. When a sigma factor is associated with the core the holoenzyme is formed, which can initiate transcription.

It carries out the reaction RNA(n) + a ribonucleoside 5'-triphosphate = RNA(n+1) + diphosphate. Its function is as follows. DNA-dependent RNA polymerase catalyzes the transcription of DNA into RNA using the four ribonucleoside triphosphates as substrates. The polypeptide is DNA-directed RNA polymerase subunit beta (Yersinia enterocolitica serotype O:8 / biotype 1B (strain NCTC 13174 / 8081)).